The sequence spans 853 residues: Protein translocase subunit SecA 1 (853 aa).

ATP is bound by residues Gln-85, 103–107, and Asp-492; that span reads GEGKT.

The protein belongs to the SecA family. As to quaternary structure, monomer and homodimer. Part of the essential Sec protein translocation apparatus which comprises SecA, SecYEG and auxiliary proteins SecDF. Other proteins may also be involved.

Its subcellular location is the cell membrane. The protein localises to the cytoplasm. It catalyses the reaction ATP + H2O + cellular proteinSide 1 = ADP + phosphate + cellular proteinSide 2.. Its function is as follows. Part of the Sec protein translocase complex. Interacts with the SecYEG preprotein conducting channel. Has a central role in coupling the hydrolysis of ATP to the transfer of proteins into and across the cell membrane, serving as an ATP-driven molecular motor driving the stepwise translocation of polypeptide chains across the membrane. The chain is Protein translocase subunit SecA 1 from Corynebacterium diphtheriae (strain ATCC 700971 / NCTC 13129 / Biotype gravis).